Consider the following 180-residue polypeptide: MQEKAVVLDDQMIRRALTRISHEIVERNKGVDNCVLVGIKTRGIFIAQRLAERIGQIEGKEMEVGELDITLYRDDLTLQSKHKEPLVKGSDIPVDITKKKVILVDDVLYTGRTVRAAMDALMDLGRPSQIQLAVLVDRGHRELPIRADYVGKNIPTSSEERIEVDLQETDQQDRVSIYDK.

Positions 101–113 (VILVDDVLYTGRT) match the PRPP-binding motif.

Belongs to the purine/pyrimidine phosphoribosyltransferase family. PyrR subfamily. In terms of assembly, homodimer and homohexamer; in equilibrium.

The enzyme catalyses UMP + diphosphate = 5-phospho-alpha-D-ribose 1-diphosphate + uracil. Regulates transcriptional attenuation of the pyrimidine nucleotide (pyr) operon by binding in a uridine-dependent manner to specific sites on pyr mRNA. This disrupts an antiterminator hairpin in the RNA and favors formation of a downstream transcription terminator, leading to a reduced expression of downstream genes. Functionally, also displays a weak uracil phosphoribosyltransferase activity which is not physiologically significant. In Bacillus mycoides (strain KBAB4) (Bacillus weihenstephanensis), this protein is Bifunctional protein PyrR.